The following is a 276-amino-acid chain: Probable endonuclease 4 (276 aa).

9 residues coordinate Zn(2+): H66, H106, E141, D175, H178, H210, D223, H225, and E255.

The protein belongs to the AP endonuclease 2 family. Requires Zn(2+) as cofactor.

The catalysed reaction is Endonucleolytic cleavage to 5'-phosphooligonucleotide end-products.. Its function is as follows. Endonuclease IV plays a role in DNA repair. It cleaves phosphodiester bonds at apurinic or apyrimidinic (AP) sites, generating a 3'-hydroxyl group and a 5'-terminal sugar phosphate. The sequence is that of Probable endonuclease 4 from Heliobacterium modesticaldum (strain ATCC 51547 / Ice1).